A 192-amino-acid chain; its full sequence is Superoxide dismutase [Fe] (192 aa).

Residues His26, His73, Asp157, and His161 each coordinate Fe cation.

This sequence belongs to the iron/manganese superoxide dismutase family. Homodimer. Fe cation serves as cofactor.

The catalysed reaction is 2 superoxide + 2 H(+) = H2O2 + O2. Functionally, destroys superoxide anion radicals which are normally produced within the cells and which are toxic to biological systems. The polypeptide is Superoxide dismutase [Fe] (Pseudoalteromonas translucida (strain TAC 125)).